The following is a 130-amino-acid chain: Small ribosomal subunit protein uS9 (130 aa).

This sequence belongs to the universal ribosomal protein uS9 family.

This is Small ribosomal subunit protein uS9 from Ectopseudomonas mendocina (strain ymp) (Pseudomonas mendocina).